The primary structure comprises 203 residues: Cell division protein SepF (203 aa).

2 disordered regions span residues 26 to 51 (DGEL…RRGQ) and 167 to 203 (GTAS…WRNQ). 2 stretches are compositionally biased toward basic and acidic residues: residues 39–50 (EPPRRSAPERRG) and 183–203 (RRSE…WRNQ).

This sequence belongs to the SepF family. In terms of assembly, homodimer. Interacts with FtsZ.

It localises to the cytoplasm. Cell division protein that is part of the divisome complex and is recruited early to the Z-ring. Probably stimulates Z-ring formation, perhaps through the cross-linking of FtsZ protofilaments. Its function overlaps with FtsA. In Symbiobacterium thermophilum (strain DSM 24528 / JCM 14929 / IAM 14863 / T), this protein is Cell division protein SepF.